We begin with the raw amino-acid sequence, 2752 residues long: Piezo-type mechanosensitive ion channel component 2 (2752 aa).

The Cytoplasmic portion of the chain corresponds to 1-12 (MASEVVCGLIFR). Residues 13–24 (LLLPICLAVACA) form a helical membrane-spanning segment. Residues 25-30 (FRYNGL) are Extracellular-facing. The helical transmembrane segment at 31 to 43 (SFVYLIYLLLIPL) threads the bilayer. At 44-50 (FSEPTKT) the chain is on the cytoplasmic side. The helical transmembrane segment at 51–76 (TMQGHTGRLLKSLCFISLSFLLLHII) threads the bilayer. The Extracellular segment spans residues 77-122 (FHITLVSLEAQHRIAPGYNCSTWEKTFRQIGFESLKGADAGNGIRV). N-linked (GlcNAc...) asparagine glycosylation is present at asparagine 95. A helical membrane pass occupies residues 123–141 (FVPDIGMFIASLTIWLLCR). Topologically, residues 142 to 221 (NIVQKPVTDE…KEFIGNMITT (80 aa)) are cytoplasmic. Residues 222 to 237 (AGKVVVTILLGSSGMM) traverse the membrane as a helical segment. Over 238-240 (LPS) the chain is Extracellular. The chain crosses the membrane as a helical span at residues 241 to 258 (LTSSVYFFVFLGLCTWWS). The Cytoplasmic segment spans residues 259–264 (WCRTFD). Residues 265–287 (PLLFSCLCVLLAIFTAGHLIGLY) traverse the membrane as a helical segment. Topologically, residues 288-335 (LYQFQFFQEAVPPNDYYARLFGIKSVIQTDCSSTWKIIVNPDLSWYHH) are extracellular. A helical transmembrane segment spans residues 336-355 (ANPILLLVMYYTLATLIRIW). Residues 356-492 (LQEPLVQDEG…SIKVHAMVSV (137 aa)) are Cytoplasmic-facing. The interval 446–478 (STPQYRWEPSDESSEKREEEEEEKEEFEEERSR) is disordered. Positions 463 to 474 (EEEEEEKEEFEE) are enriched in acidic residues. Residues 493-514 (FQFIMKQSYICALIAMMAWSIT) form a helical membrane-spanning segment. Over 515-519 (YHSWL) the chain is Extracellular. A helical membrane pass occupies residues 520-531 (TFVLLIWSCTLW). Residues 532-535 (MIRN) lie on the Cytoplasmic side of the membrane. Residues 536–562 (RRKYAMISSPFMVVYGNLLLILQYIWS) traverse the membrane as a helical segment. Residues 563-583 (FELPEIKKVPGFLEKKEPGEL) lie on the Extracellular side of the membrane. Residues 584–614 (ASKILFTITFWLLLRQHLTEQKALQEKEALL) traverse the membrane as a helical segment. Over 615 to 685 (SEVKIGSQEN…GNLVVAMFIK (71 aa)) the chain is Cytoplasmic. The span at 623-632 (ENEEKDEELQ) shows a compositional bias: acidic residues. Positions 623–664 (ENEEKDEELQDIQVEGEPKEEEEEEAKEEKQERKKVEQEEAE) are disordered. Residues 649 to 660 (KEEKQERKKVEQ) are compositionally biased toward basic and acidic residues. Residues 686–699 (YWIYVCGGMFFFVS) form a helical membrane-spanning segment. Over 700-705 (FEGKIV) the chain is Extracellular. The chain crosses the membrane as a helical span at residues 706-724 (MYKIIYMVLFLFCVALYQV). Over 725–733 (HYEWWRKIL) the chain is Cytoplasmic. Residues 734 to 753 (KYFWMSVVIYTMLVLIFIYT) traverse the membrane as a helical segment. At 754 to 785 (YQFENFPGLWQNMTGLKKEKLEDLGLKQFTVA) the chain is on the extracellular side. A helical membrane pass occupies residues 786-807 (ELFTRIFIPTSFLLVCILHLHY). Residues 808-940 (FHDRFLELTD…QVFMWWILEL (133 aa)) lie on the Cytoplasmic side of the membrane. A Phosphoserine modification is found at serine 838. Residues 862–883 (PGEEKLEGYSEKAQKGDLGKDS) show a composition bias toward basic and acidic residues. The disordered stretch occupies residues 862-902 (PGEEKLEGYSEKAQKGDLGKDSEESEEDGEEEEESEEEEET). Residues 884-902 (EESEEDGEEEEESEEEEET) are compositionally biased toward acidic residues. Residues 941–956 (HIIKIVSSYIIWVSVK) traverse the membrane as a helical segment. The Extracellular portion of the chain corresponds to 957-962 (EVSLFN). A helical membrane pass occupies residues 963 to 972 (YVFLISWAFA). Residues 973 to 980 (LPYAKLRR) are Cytoplasmic-facing. Residues 981 to 1001 (LASSVCTVWTCVIIVCKMLYQ) traverse the membrane as a helical segment. Topologically, residues 1002–1057 (LQTIKPENFSVNCSLPNENQTNIPFNELNKSLLYSAPIDPTEWVGLRKSSPLLVYL) are extracellular. N-linked (GlcNAc...) asparagine glycosylation occurs at asparagine 1013. Residues cysteine 1014 and cysteine 1192 are joined by a disulfide bond. The chain crosses the membrane as a helical span at residues 1058 to 1082 (RNNLLMLAILAFEVTIYRHQEYYRG). At 1083-1123 (RNNLTAPVSRTIFHDITRLHLDDGLINCAKYFINYFFYKFG) the chain is on the cytoplasmic side. The helical transmembrane segment at 1124-1138 (LETCFLMSVNVIGQR) threads the bilayer. The Extracellular segment spans residues 1139 to 1140 (MD). The chain crosses the membrane as a helical span at residues 1141 to 1154 (FYAMIHACWLIAVL). Residues 1155-1165 (YRRRRKAIAEI) are Cytoplasmic-facing. The helical transmembrane segment at 1166–1185 (WPKYCCFLACIITFQYFICI) threads the bilayer. The Extracellular portion of the chain corresponds to 1186-1222 (GIPPAPCRDYPWRFKGASFNDNIIKWLYFPDFIVRPN). Residues 1223 to 1243 (PVFLVYDFMLLLCASLQRQIF) form a helical membrane-spanning segment. The Cytoplasmic segment spans residues 1244-1297 (EDENKAAVRIMAGDNVEICMNLDAASFSQHNPVPDFIHCRSYLDMSKVIIFSYL). The helical transmembrane segment at 1298–1310 (FWFVLTIIFITGT) threads the bilayer. The Extracellular portion of the chain corresponds to 1311–1316 (TRISIF). The chain crosses the membrane as a helical span at residues 1317-1329 (CMGYLVACFYFLL). The Cytoplasmic portion of the chain corresponds to 1330–1338 (FGGDLLLKP). Residues 1339-1364 (IKSILRYWDWLIAYNVFVITMKNILS) traverse the membrane as a helical segment. At 1365–1413 (IGACGYIGTLVHNSCWLIQAFSLACTVKGYQMPAANSPCTLPSGEAGII) the chain is on the extracellular side. The helical transmembrane segment at 1414-1430 (WDSICFAFLLLQRRVFM) threads the bilayer. The Cytoplasmic portion of the chain corresponds to 1431-1921 (SYYFLHVVAD…YAMYNTLVAR (491 aa)). Residues 1458-1529 (TIVKAVKARI…EREADKQKAK (72 aa)) are a coiled coil. Disordered stretches follow at residues 1488 to 1534 (QQKY…KKKQ), 1593 to 1636 (ALRQ…KKSD), and 1844 to 1868 (SQDDSAGKNRMAVSPDDSRTDKLGS). The span at 1594–1615 (LRQRHKEKKRSAREERKRRRKG) shows a compositional bias: basic residues. The helical transmembrane segment at 1922-1936 (SEMVCYFVIILNHMV) threads the bilayer. At 1937–1943 (SASMITL) the chain is on the extracellular side. Residues 1944 to 1955 (LLPILIFLWAML) traverse the membrane as a helical segment. At 1956-1961 (SVPRPS) the chain is on the cytoplasmic side. The chain crosses the membrane as a helical span at residues 1962–1983 (RRFWMMAIVYTEVAIVVKYFFQ). Residues 1984-2016 (FGFFPWNKNVEVNKDKPYHPPNIIGVEKKEGYV) are Extracellular-facing. Residues 2017-2035 (LYDLIQLLALFFHRSILKC) traverse the membrane as a helical segment. The Cytoplasmic segment spans residues 2036–2189 (HGLWDEDDMT…HPEYSAVTDV (154 aa)). Disordered stretches follow at residues 2047-2069 (SGMAREESDDELSLGHGRRDSSD) and 2090-2135 (QQTA…SVLS). Residues 2100–2127 (GSSSEPSQRSSFSSNRSQRGSTSTRNSS) are compositionally biased toward low complexity. Residues 2190–2209 (YVLMFLADTVDFIIIVFGFW) traverse the membrane as a helical segment. The Extracellular portion of the chain corresponds to 2210–2231 (AFGKHSAAADITSSLSEDQVPG). The helical transmembrane segment at 2232 to 2252 (PFLVMVLIQFGTMVVDRALYL) threads the bilayer. The Cytoplasmic portion of the chain corresponds to 2253-2256 (RKTV). Residues 2257 to 2280 (LGKVIFQVILVFGIHFWMFFILPG) form a helical membrane-spanning segment. Residues 2281-2289 (VTERKFSQN) are Extracellular-facing. A helical membrane pass occupies residues 2290–2312 (LVAQLWYFVKCVYFGLSAYQIRC). The Cytoplasmic portion of the chain corresponds to 2313-2397 (GYPTRVLGNF…YPQPRGQKKK (85 aa)). Residues 2398-2421 (KVVKYGMGGMIIVLLICIVWFPLL) form a helical membrane-spanning segment. Residues 2422–2669 (FMSLIKSVAG…PSLGFLAGYG (248 aa)) lie on the Extracellular side of the membrane. Residues 2670–2690 (IMGLYASVVLVIGKFVREFFS) traverse the membrane as a helical segment. Residues 2691–2752 (GISHSIMFEE…MIKWTREKTN (62 aa)) lie on the Cytoplasmic side of the membrane.

It belongs to the PIEZO (TC 1.A.75) family. In terms of assembly, homotrimer; the homotrimer forms a propeller-shaped Piezo channel with a cation-ion conducting pore. Heterotrimeric interaction may occur between PIEZO1 and PIEZO2. Interacts with STOML3. Interacts with TMC7; the interaction inhibits PIEZO2-conducted mechanically activated currents. Interacts with TMC1; the interaction may be part of the MET complex. Interacts with MDFIC (via C-terminus); the interaction prolongs Piezo channel inactivation. Interacts with MDFI (via C-terminus); the interaction prolongs Piezo channel inactivation.

It is found in the cell membrane. It catalyses the reaction Ca(2+)(in) = Ca(2+)(out). Its activity is regulated as follows. Regulated by auxillary subunits MDFIC and MDFI. Channel activity is inhibited by TMEM120A. Phosphatidic acid and lysophosphatidic acid inhibit PIEZO2 channel activity. Its function is as follows. Pore-forming subunit of the mechanosensitive non-specific cation Piezo channel required for rapidly adapting mechanically activated (MA) currents and has a key role in sensing touch and tactile pain. Piezo channels are homotrimeric three-blade propeller-shaped structures that utilize a cap-motion and plug-and-latch mechanism to gate their ion-conducting pathways. Expressed in sensory neurons, is essential for diverse physiological processes, including respiratory control, systemic metabolism, urinary function, and proprioception. Mediates airway stretch sensing, enabling efficient respiration at birth and maintaining normal breathing in adults. It regulates brown and beige adipose tissue morphology and function, preventing systemic hypermetabolism. In the lower urinary tract, acts as a sensor in both the bladder urothelium and innervating sensory neurons being required for bladder-stretch sensing and urethral micturition reflexes, ensuring proper urinary function. Additionally, PIEZO2 serves as the principal mechanotransducer in proprioceptors, facilitating proprioception and coordinated body movements. In inner ear hair cells, PIEZO1/2 subunits may constitute part of the mechanotransducer (MET) non-selective cation channel complex where they may act as pore-forming ion-conducting component in the complex. Required for Merkel-cell mechanotransduction. Plays a major role in light-touch mechanosensation. The sequence is that of Piezo-type mechanosensitive ion channel component 2 from Homo sapiens (Human).